Here is a 260-residue protein sequence, read N- to C-terminus: MSTNNSVLVLKVGGALLQCEMGMARLMDTAAAMIANGQQVLMVHGGGCLVDEQLAANGMETVKLEGLRVTPPEQMPIIAGALAGTSNKILQGAATKAGIVSIGMSLADGNTVSAKIKDERLGLVGEVSPKDATYLKFILSQGWMPICSSIAMMDDGQMLNVNADQAATVLAKLVGGKLVLLSDVSGVLDGKGQLIPSLNGKQIADLVKQGVIEKGMKVKVEAALEVAQWMGQAVQVASWRDASQLVALAKGEAVGTQIQP.

Residues 46–47 (GG), R68, and N160 contribute to the substrate site.

This sequence belongs to the acetylglutamate kinase family. ArgB subfamily.

It localises to the cytoplasm. The enzyme catalyses N-acetyl-L-glutamate + ATP = N-acetyl-L-glutamyl 5-phosphate + ADP. It functions in the pathway amino-acid biosynthesis; L-arginine biosynthesis; N(2)-acetyl-L-ornithine from L-glutamate: step 2/4. In terms of biological role, catalyzes the ATP-dependent phosphorylation of N-acetyl-L-glutamate. The protein is Acetylglutamate kinase of Shewanella sp. (strain ANA-3).